The sequence spans 1241 residues: Anion exchange protein 2 (1241 aa).

Residues 1 to 240 (MSSAPRRPAK…RSYNLQERRR (240 aa)) are disordered. Residues 1 to 707 (MSSAPRRPAK…SDFRDALDPQ (707 aa)) are Cytoplasmic-facing. Composition is skewed to basic and acidic residues over residues 37 to 49 (ELHRTLGVERFEE) and 58 to 75 (GGEEPGRSYGEEDFEYHR). Basic residues-rich tracts occupy residues 76 to 85 (QSSHHIHHPL) and 94 to 110 (RRRKTPQGPGRKPRRRP). Phosphoserine is present on residues Ser113, Ser132, Ser144, Ser170, Ser172, and Ser173. Residues 120-133 (TIEEGEEDEDEASE) are compositionally biased toward acidic residues. Low complexity predominate over residues 141 to 155 (TQPSPVSTPSSVQFF). Thr183 is subject to Phosphothreonine. Positions 189-209 (GAQAGTQVEEAEAEAVAVASG) are enriched in low complexity. Positions 210-219 (TAGGDDGGAS) are enriched in gly residues. Ser243 is subject to Phosphoserine. A Phosphothreonine modification is found at Thr257. Lys274 carries the post-translational modification N6-methyllysine. Residues 288-320 (LVRKNAKGSTQSGREGREPGPTPRARPRAPHKP) form a disordered region. Ser443 carries the phosphoserine modification. The tract at residues 449–471 (SLLGHHHGQGAESDPHVTEPLMG) is disordered. The next 4 helical transmembrane spans lie at 708-731 (CLAAVIFIYFAALSPAITFGGLLG), 737-774 (LIGVSELIMSTALQGVVFCLLGAQPLLVIGFSGPLLVF), 784-816 (SNHLEYLVGRVWIGFWLVFLALLMVALEGSFLV), and 826-847 (IFAFLISLIFIYETFYKLVKIF). The membrane (anion exchange) stretch occupies residues 708–1241 (CLAAVIFIYF…DEYNEMPMPV (534 aa)). Over 848-900 (QEHPLHGCSASNSSEVDGGENMTWAGARPTLGPGNRSLAGQSGQGKPRGQPNT) the chain is Extracellular. Residues Asn859, Asn868, and Asn882 are each glycosylated (N-linked (GlcNAc...) asparagine). A helical transmembrane segment spans residues 901–918 (ALLSLVLMAGTFFIAFFL). The Cytoplasmic portion of the chain corresponds to 919-933 (RKFKNSRFFPGRIRR). Helical transmembrane passes span 934–954 (VIGDFGVPIAILIMVLVDYSI), 988–1010 (PFPVWMMVASLLPAILVFILIFM), 1036–1059 (LLLIVAMGGICALFGLPWLAAATV), 1091–1136 (VTGL…IQFY), and 1163–1199 (MHLFTALQLLCLALLWAVMSTAASLAFPFILILTVPL). Residue Cys1173 is the site of S-palmitoyl cysteine attachment.

It belongs to the anion exchanger (TC 2.A.31) family. As to expression, expressed in the liver, stomach, kidney, prostate, thyroid and rectum. Expressed in the liver and kidney.

The protein resides in the apical cell membrane. Its subcellular location is the basolateral cell membrane. The catalysed reaction is hydrogencarbonate(in) + chloride(out) = hydrogencarbonate(out) + chloride(in). Sodium-independent anion exchanger which mediates the electroneutral exchange of chloride for bicarbonate ions across the cell membrane. Plays an important role in osteoclast differentiation and function. Regulates bone resorption and calpain-dependent actin cytoskeleton organization in osteoclasts via anion exchange-dependent control of pH. Essential for intracellular pH regulation in CD8(+) T-cells upon CD3 stimulation, modulating CD8(+) T-cell responses. The sequence is that of Anion exchange protein 2 (SLC4A2) from Homo sapiens (Human).